A 225-amino-acid chain; its full sequence is ATP-dependent dethiobiotin synthetase BioD (225 aa).

Residue 12–17 participates in ATP binding; it reads GVGKTV. Thr-16 contacts Mg(2+). Lys-37 is an active-site residue. Substrate is bound at residue Thr-41. Residues Asp-46, 105–108, 166–167, and 196–198 contribute to the ATP site; these read EGAG, GS, and PEG. Positions 46 and 105 each coordinate Mg(2+).

It belongs to the dethiobiotin synthetase family. In terms of assembly, homodimer. Requires Mg(2+) as cofactor.

It is found in the cytoplasm. It carries out the reaction (7R,8S)-7,8-diammoniononanoate + CO2 + ATP = (4R,5S)-dethiobiotin + ADP + phosphate + 3 H(+). It participates in cofactor biosynthesis; biotin biosynthesis; biotin from 7,8-diaminononanoate: step 1/2. In terms of biological role, catalyzes a mechanistically unusual reaction, the ATP-dependent insertion of CO2 between the N7 and N8 nitrogen atoms of 7,8-diaminopelargonic acid (DAPA, also called 7,8-diammoniononanoate) to form a ureido ring. The sequence is that of ATP-dependent dethiobiotin synthetase BioD from Mycobacteroides abscessus (strain ATCC 19977 / DSM 44196 / CCUG 20993 / CIP 104536 / JCM 13569 / NCTC 13031 / TMC 1543 / L948) (Mycobacterium abscessus).